A 211-amino-acid polypeptide reads, in one-letter code: Probable nicotinate-nucleotide adenylyltransferase (211 aa).

This sequence belongs to the NadD family.

The catalysed reaction is nicotinate beta-D-ribonucleotide + ATP + H(+) = deamido-NAD(+) + diphosphate. It participates in cofactor biosynthesis; NAD(+) biosynthesis; deamido-NAD(+) from nicotinate D-ribonucleotide: step 1/1. Functionally, catalyzes the reversible adenylation of nicotinate mononucleotide (NaMN) to nicotinic acid adenine dinucleotide (NaAD). The sequence is that of Probable nicotinate-nucleotide adenylyltransferase from Thermoanaerobacter sp. (strain X514).